Consider the following 942-residue polypeptide: AP-1 complex subunit beta (942 aa).

6 HEAT repeats span residues 45 to 82 (KDVS…NHPD), 117 to 154 (NITE…VNPE), 156 to 193 (VENQ…VSKK), 273 to 313 (DVIR…KRPE), 384 to 421 (RASE…KYPN), and 458 to 495 (DNAH…KRPK). Residues 590–700 (GLRNKEEEDE…NDLSFLGGGG (111 aa)) are disordered. Positions 596–609 (EEDEEEPDYVDDDN) are enriched in acidic residues. Low complexity-rich tracts occupy residues 613 to 645 (QQGG…QQQP) and 664 to 677 (NNNN…NNNN). A compositionally biased stretch (polar residues) spans 678–693 (MYSPQPQQFNGNSNDL).

Belongs to the adaptor complexes large subunit family. As to quaternary structure, adaptor protein complex 1 (AP-1) is a heterotetramer composed of two large adaptins (gamma-type subunit and beta-type subunit), a medium adaptin (mu-type subunit) and a small adaptin (sigma-type subunit).

The protein resides in the golgi apparatus. The protein localises to the trans-Golgi network. Its subcellular location is the cytoplasmic vesicle. It localises to the clathrin-coated vesicle membrane. Functionally, subunit of clathrin-associated adaptor protein complex 1 that plays a role in protein sorting in the trans-Golgi network (TGN) and endosomes. The AP complexes mediate the recruitment of clathrin to membranes and the recognition of sorting signals within the cytosolic tails of transmembrane cargo molecules. Also involved in early steps of phagocytosis and macropinocytosis. This Dictyostelium discoideum (Social amoeba) protein is AP-1 complex subunit beta (ap1b1).